Here is a 1000-residue protein sequence, read N- to C-terminus: Sop-2-related protein 1 (1000 aa).

3 disordered regions span residues 355 to 374, 379 to 422, and 466 to 509; these read KIMK…QYQQ, HQQH…GPSE, and APSE…VARG. Over residues 390-404 the composition is skewed to low complexity; sequence SSSSVPSTSSPSCSS. A compositionally biased stretch (basic and acidic residues) spans 406–415; that stretch reads ANRKEMETVR. Residues 489-502 show a composition bias toward low complexity; it reads GPSQQQQIPGTSQQ. The RNA-binding stretch occupies residues 633–720; sequence REQILPQQYM…LNTSSVQPSE (88 aa). The segment at 948 to 1000 is disordered; that stretch reads HRMHSQRPPSMGNSSTSSEASSTSPTNAATATSSPASNRPTTSTAQPPTLNPT. Over residues 960–992 the composition is skewed to low complexity; that stretch reads NSSTSSEASSTSPTNAATATSSPASNRPTTSTA.

As to quaternary structure, binds through its N-terminal region to the N-terminal region of sop-2.

The protein localises to the nucleus. Acts synergistically with sop-2 to maintain the transcriptionally repressive state of homeotic genes throughout development. Not required to initiate repression, but to maintain it during later stages of development. Also required to repress expression of other genes. Binds RNA in a sequence-independent manner. The sequence is that of Sop-2-related protein 1 (sor-1) from Caenorhabditis elegans.